A 126-amino-acid polypeptide reads, in one-letter code: Large ribosomal subunit protein uL22 (126 aa).

Belongs to the universal ribosomal protein uL22 family. In terms of assembly, part of the 50S ribosomal subunit.

Its function is as follows. This protein binds specifically to 23S rRNA; its binding is stimulated by other ribosomal proteins, e.g. L4, L17, and L20. It is important during the early stages of 50S assembly. It makes multiple contacts with different domains of the 23S rRNA in the assembled 50S subunit and ribosome. The globular domain of the protein is located near the polypeptide exit tunnel on the outside of the subunit, while an extended beta-hairpin is found that lines the wall of the exit tunnel in the center of the 70S ribosome. This is Large ribosomal subunit protein uL22 from Ruegeria sp. (strain TM1040) (Silicibacter sp.).